Here is a 336-residue protein sequence, read N- to C-terminus: Probable assembly chaperone of rpl4 (336 aa).

TPR repeat units follow at residues 39–72 (GRAFELLGEVYAELADVKKARSAFKEAVSRSKNL), 75–108 (DQGYEKYLWLAQINDNGSKALKLYQKGVTILERL), 110–143 (IDKGEDADLKKKIQGAYCSIAELFMTDLCMQPDA), and 162–195 (AEALQTLASMRISQQKIEEAKDALSKCLQSISRA). The disordered stretch occupies residues 316–336 (DEENEEAEWETSENEEEMDED).

This sequence belongs to the ACL4 family.

It localises to the cytoplasm. The protein resides in the nucleus. Its subcellular location is the nucleolus. Functionally, acts as a chaperone for the L4 ribosomal subunit encoded by rpl4A and rpl4B, required for hierarchical ribosome assembly. Shields ribosomal protein L4 until timely release and insertion into the pre-ribosome is possible, once ribosomal protein L18 is present. In Schizosaccharomyces pombe (strain 972 / ATCC 24843) (Fission yeast), this protein is Probable assembly chaperone of rpl4.